Here is a 336-residue protein sequence, read N- to C-terminus: 3-isopropylmalate dehydrogenase (336 aa).

Residues Arg-87, Arg-97, Arg-121, and Asp-211 each contribute to the substrate site. Residues Asp-211, Asp-235, and Asp-239 each coordinate Mg(2+). Residue 271 to 283 (GSAPDIAGQGVAD) participates in NAD(+) binding.

It belongs to the isocitrate and isopropylmalate dehydrogenases family. LeuB type 2 subfamily. In terms of assembly, homodimer. The cofactor is Mg(2+). It depends on Mn(2+) as a cofactor.

The protein localises to the cytoplasm. The enzyme catalyses (2R,3S)-3-isopropylmalate + NAD(+) = 4-methyl-2-oxopentanoate + CO2 + NADH. Its pathway is amino-acid biosynthesis; L-leucine biosynthesis; L-leucine from 3-methyl-2-oxobutanoate: step 3/4. Its function is as follows. Catalyzes the oxidation of 3-carboxy-2-hydroxy-4-methylpentanoate (3-isopropylmalate) to 3-carboxy-4-methyl-2-oxopentanoate. The product decarboxylates to 4-methyl-2 oxopentanoate. This Mycobacterium avium (strain 104) protein is 3-isopropylmalate dehydrogenase.